Reading from the N-terminus, the 1382-residue chain is MKSPAVLAPGILVFLFTFVQKSDGECKEALVKSRMNVNMQYQLPNFTAETSIQNVVLHKHHIYLGAVNYIYVLNDKDLQKVAEYKTGPVLEHPDCFPCQDCSHKANLSGGVWKDNINMALLVDTYYDDQLISCGSVHRGTCQRHVLPPNNTADIESEVHCMYSPQADEETSQCPDCVVSALGTKVLLSEKERFINFFVGNTINSSYLPDHSLHSISVRRLKETQDGFKFLTDQSYIDVLPELQDSYPIKYVHAFESNHFIYFLTVQRETLDAQTFHTRIIRFCSTDSGLHSYMEMPLECILTEKRRKRSTKQEVFNILQAAYVSKPGAQLARQIGANLNDDILYGVFAQSKPDSSEPMNRSAVCAFPVKYVNEFFNKIVNKNNVRCLQHFYGPNHEHCFNRTLLRNSSGCEVRSDEYRTEFTTALPRVDLFTGQFNQVLLTSISTFIKGDLTIANLGTSEGRFMQVVVSRSGSLTPHVNFRLDSHPVSPEVIVEHPPNQNGYTLVVTGKKITKIPLNGLGCEHFQSCSQCLSAPSFVQCGWCRDKCVRLEECPSGTWTQETCLPAIYKVFPTSAPLEGGTTLTVCGWDFGFKRNNKFDLKKTRVLIGNESCTLTLSESTTNMLKCTVGPAMNEHFNMSIVISNSRGSVQYSTFSYVDPIITSISPNYGPKTGGTLLTLTGKHLNSGNSRHISIGGKTCTLKSVSHSILECYTPAQSTPSEFSIKLKIDLANREVNSFIYREDPIVYEIHPTKSFVSGGSTITGVGKNLNSVSILRMVINVHEAGRNFTVACQHRSNSEIICCTTPSLQQLNLQLPLKTKAFFMLDGIHSKYFDLIYVHNPVFKPFEKPVMISIGNENVLEIKGNDIDPEAVKGEVLKVGNKSCENIHSHSEAVLCTVPNDLLKLNSELNIEWKQAISSTVLGKVIVQPDQNFTGLIVGVVSISIILLLLLGLFLWLKKRKQIKDLGSELVRYDARVHTPHLDRLVSARSVSPTTEMVSNESVDYRATFPEDQFPNASQNGSCRQVQYPLTDLSPILTSGDSDVSSPLLQNTVHIDLSALNPELVQAVQHVVIGPSSLIVHFNEVIGRGHFGCVYHGTLLDNDDKKIHCAVKSLNRITDIGEVSQFLTEGIIMKDFSHPNVLSLLGICLRSEGSPLVVLPYMKHGDLRNFIRNETHNPTVKDLIGFGLQVAKGMEYLASKKFVHRDLAARNCMLDEKFTVKVADFGLARDVYDKEYYSVHNKTGAKLPVKWMALESLQTQKFTTKSDVWSFGVLLWELMTRGAPPYPDVNTFDITVYLLQGRRLLQPEYCPDALYEVMLKCWHPKAELRPSFSELVSRISAIFSTFIGEHYVHVNATYVNVKCVAPYPSLLSSQDNVNGEGDT.

Residues Met-1–Gly-24 form the signal peptide. Over Glu-25–Thr-933 the chain is Extracellular. Residues Lys-27–Leu-516 form the Sema domain. An N-linked (GlcNAc...) asparagine glycan is attached at Asn-45. 4 disulfide bridges follow: Cys-95-Cys-101, Cys-98-Cys-160, Cys-133-Cys-141, and Cys-173-Cys-176. A glycan (N-linked (GlcNAc...) asparagine) is linked at Asn-106. A glycan (N-linked (GlcNAc...) asparagine) is linked at Asn-149. 2 N-linked (GlcNAc...) asparagine glycosylation sites follow: Asn-203 and Asn-359. Intrachain disulfides connect Cys-299-Cys-364 and Cys-386-Cys-398. 2 N-linked (GlcNAc...) asparagine glycosylation sites follow: Asn-400 and Asn-406. Cystine bridges form between Cys-521/Cys-539, Cys-527/Cys-562, Cys-530/Cys-546, and Cys-542/Cys-552. IPT/TIG domains follow at residues Pro-564–Val-656, Pro-658–Arg-740, and Pro-743–Val-837. Residue Thr-583 is glycosylated (O-linked (Man) threonine). N-linked (GlcNAc...) asparagine glycans are attached at residues Asn-608 and Asn-636. 2 O-linked (Man) threonine glycosylation sites follow: Thr-677 and Thr-762. Asn-786, Asn-880, and Asn-931 each carry an N-linked (GlcNAc...) asparagine glycan. The chain crosses the membrane as a helical span at residues Gly-934 to Leu-956. Topologically, residues Lys-957–Thr-1382 are cytoplasmic. Position 967 is a phosphoserine (Ser-967). A Phosphothreonine modification is found at Thr-978. Residues Ser-991, Ser-998, and Ser-1001 each carry the phosphoserine modification. Phosphotyrosine is present on Tyr-1004. Residues Val-1079–Ile-1346 enclose the Protein kinase domain. ATP-binding positions include Ile-1085–Val-1093 and Lys-1111. Residue Asp-1205 is the Proton acceptor of the active site. Residues Leu-1213 to Thr-1382 form an interaction with RANBP9 region. Tyr-1231 carries the phosphotyrosine modification. Tyr-1235 and Tyr-1236 each carry phosphotyrosine; by autocatalysis. Residue Thr-1290 is modified to Phosphothreonine. Positions Trp-1321–Val-1360 are interaction with MUC20. Residues Tyr-1350 and Tyr-1357 each carry the phosphotyrosine; by autocatalysis modification. Phosphotyrosine is present on Tyr-1366.

It belongs to the protein kinase superfamily. Tyr protein kinase family. In terms of assembly, heterodimer made of an alpha chain (50 kDa) and a beta chain (145 kDa) which are disulfide linked. Binds PLXNB1. Interacts when phosphorylated with downstream effectors including STAT3, PIK3R1, SRC, PCLG1, GRB2 and GAB1. Interacts with SPSB1, SPSB2 and SPSB4. Interacts with INPP5D/SHIP1. When phosphorylated at Tyr-1357, interacts with INPPL1/SHIP2. Interacts with RANBP9 and RANBP10, as well as SPSB1, SPSB2, SPSB3 and SPSB4. SPSB1 binding occurs in the presence and in the absence of HGF, however HGF treatment has a positive effect on this interaction. Interacts with MUC20; prevents interaction with GRB2 and suppresses hepatocyte growth factor-induced cell proliferation. Interacts with GRB10. Interacts with PTPN1 and PTPN2. Interacts with HSP90AA1 and HSP90AB1; the interaction suppresses MET kinase activity. Interacts with tensin TNS3. Interacts (when phosphorylated) with tensin TNS4 (via SH2 domain); the interaction increases MET protein stability by inhibiting MET endocytosis and subsequent lysosomal degradation. In terms of processing, autophosphorylated in response to ligand binding on Tyr-1235 and Tyr-1236 in the kinase domain leading to further phosphorylation of Tyr-1350 and Tyr-1357 in the C-terminal multifunctional docking site. Dephosphorylated by PTPRJ at Tyr-1350 and Tyr-1366. Dephosphorylated by PTPN1 and PTPN2. Post-translationally, ubiquitinated. Ubiquitination by CBL regulates the receptor stability and activity through proteasomal degradation. O-mannosylation of IPT/TIG domains by TMEM260 is required for protein maturation. O-mannosylated residues are composed of single mannose glycans that are not elongated or modified.

It localises to the membrane. The catalysed reaction is L-tyrosyl-[protein] + ATP = O-phospho-L-tyrosyl-[protein] + ADP + H(+). With respect to regulation, in its inactive state, the C-terminal tail interacts with the catalytic domain and inhibits the kinase activity. Upon ligand binding, the C-terminal tail is displaced and becomes phosphorylated, thus increasing the kinase activity. Receptor tyrosine kinase that transduces signals from the extracellular matrix into the cytoplasm by binding to hepatocyte growth factor/HGF ligand. Regulates many physiological processes including proliferation, scattering, morphogenesis and survival. Ligand binding at the cell surface induces autophosphorylation of MET on its intracellular domain that provides docking sites for downstream signaling molecules. Following activation by ligand, interacts with the PI3-kinase subunit PIK3R1, PLCG1, SRC, GRB2, STAT3 or the adapter GAB1. Recruitment of these downstream effectors by MET leads to the activation of several signaling cascades including the RAS-ERK, PI3 kinase-AKT, or PLCgamma-PKC. The RAS-ERK activation is associated with the morphogenetic effects while PI3K/AKT coordinates prosurvival effects. During embryonic development, MET signaling plays a role in gastrulation, development and migration of muscles and neuronal precursors, angiogenesis and kidney formation. In adults, participates in wound healing as well as organ regeneration and tissue remodeling. Also promotes differentiation and proliferation of hematopoietic cells. The sequence is that of Hepatocyte growth factor receptor (MET) from Muntiacus muntjak (Barking deer).